Consider the following 1007-residue polypeptide: Glutamate receptor ionotropic, delta-2 (1007 aa).

An N-terminal signal peptide occupies residues 1-23; it reads MEVFPFLLVLSVWWSRTWDSANA. The segment at 24-345 is interaction with CBLN1 homotrimer; the sequence is DSIIHIGAIF…NAFHKKLEDR (322 aa). Over 24-566 the chain is Extracellular; the sequence is DSIIHIGAIF…DMFACLAPFD (543 aa). 3 cysteine pairs are disulfide-bonded: Cys83–Cys355, Cys99–Cys131, and Cys298–Cys310. An N-linked (GlcNAc...) asparagine glycan is attached at Asn293. The N-linked (GlcNAc...) asparagine glycan is linked to Asn426. The Ca(2+) site is built by Glu531, Val534, and Asp535. Residues 567-587 traverse the membrane as a helical segment; sequence LSLWACIAGTVLLVGLLVYLL. Residues 588 to 635 are Cytoplasmic-facing; the sequence is NWLNPPRLQMGSMTSTTLYNSMWFVYGSFVQQGGEVPYTTLATRMMMG. Residues 636-656 form a helical membrane-spanning segment; sequence AWWLFALIVISSYTANLAAFL. Residues 657–830 lie on the Extracellular side of the membrane; sequence TITRIESSIQ…QKGGALDIKS (174 aa). N-linked (GlcNAc...) asparagine glycosylation is found at Asn713 and Asn716. Asp753, Asp755, and Ser757 together coordinate Ca(2+). The helical transmembrane segment at 831-851 threads the bilayer; the sequence is FAGVFCILAAGIVLSCFIAML. Residues 852–1007 lie on the Cytoplasmic side of the membrane; that stretch reads ETWWNKRKGS…GNDPDRGTSI (156 aa). A Phosphoserine modification is found at Ser883. Position 886 is a phosphothreonine (Thr886). At Ser890 the chain carries Phosphoserine. An interaction with AP4M1 region spans residues 921–991; sequence DFRNTHITTT…MSSIPYQPTP (71 aa). Residues 1005-1007 carry the PDZ-binding motif; that stretch reads TSI. Ser1006 is modified (phosphoserine).

It belongs to the glutamate-gated ion channel (TC 1.A.10.1) family. GRID2 subfamily. In terms of assembly, tetramer; dimer of dimers. Interacts with EML2, MAGI2 (via PDZ domains) and AP4M1. Interacts with BECN1, GOPC, GRID2IP, SHANK1 and SHANK2. Interacts with CBLN2, but not with CBLN4. Interacts with CBLN1 (via C1q domain); the interaction is CBLN1-NRX1 complex formation-dependent; CBLN1-binding is calcium-independent; CBLN1 hexamers anchor GRID2 N-terminal domain dimers to monomeric NRXN1 isoform beta; promotes synaptogenesis and mediates the D-Serine-dependent long term depression signals and AMPA receptor endocytosis.

The protein resides in the postsynaptic cell membrane. It carries out the reaction Ca(2+)(in) = Ca(2+)(out). The enzyme catalyses Na(+)(in) = Na(+)(out). Member of the ionotropic glutamate receptor family, which plays a crucial role in synaptic organization and signal transduction in the central nervous system. Although it shares structural features with ionotropic glutamate receptors, does not bind glutamate as a primary ligand. Promotes synaptogenesis and mediates the D-Serine-dependent long term depression signals and AMPA receptor endocytosis of cerebellar parallel fiber-Purkinje cell (PF-PC) synapses through the NRX1B-CBLN1-GRID2 triad complex. In the presence of neurexins and cerebellins, forms cation-selective channels that are proposed to be gated by glycine and D-serine. However, recent research disputes this ligand-gated cation channel activity. Cation-selective ion channel activity can be triggered by GRM1 in Purkinje cells. The sequence is that of Glutamate receptor ionotropic, delta-2 (GRID2) from Homo sapiens (Human).